A 233-amino-acid chain; its full sequence is Superoxide dismutase [Mn], mitochondrial (233 aa).

The N-terminal 27 residues, 1 to 27, are a transit peptide targeting the mitochondrion; the sequence is MALRSLVTRKNLPSAFKAATGLGQLRG. 4 residues coordinate Mn(2+): histidine 55, histidine 103, aspartate 192, and histidine 196.

This sequence belongs to the iron/manganese superoxide dismutase family. In terms of assembly, homotetramer. The cofactor is Mn(2+). Present in all tissues examined (leaf, petiole, root, latex, callus) with young leaves showing the highest levels in intact plants.

It localises to the mitochondrion matrix. It catalyses the reaction 2 superoxide + 2 H(+) = H2O2 + O2. Functionally, destroys superoxide anion radicals which are normally produced within the cells and which are toxic to biological systems. The protein is Superoxide dismutase [Mn], mitochondrial (SODA) of Hevea brasiliensis (Para rubber tree).